A 572-amino-acid polypeptide reads, in one-letter code: Proline--tRNA ligase (572 aa).

The protein belongs to the class-II aminoacyl-tRNA synthetase family. ProS type 1 subfamily. Homodimer. May form a tertiary complex with YbaK and t-RNA(Pro).

The protein localises to the cytoplasm. It catalyses the reaction tRNA(Pro) + L-proline + ATP = L-prolyl-tRNA(Pro) + AMP + diphosphate. In terms of biological role, catalyzes the attachment of proline to tRNA(Pro) in a two-step reaction: proline is first activated by ATP to form Pro-AMP and then transferred to the acceptor end of tRNA(Pro). As ProRS can inadvertently accommodate and process non-cognate amino acids such as alanine and cysteine, to avoid such errors it has two additional distinct editing activities against alanine. One activity is designated as 'pretransfer' editing and involves the tRNA(Pro)-independent hydrolysis of activated Ala-AMP. The other activity is designated 'posttransfer' editing and involves deacylation of mischarged Ala-tRNA(Pro). The misacylated Cys-tRNA(Pro) is not edited by ProRS, but is probably edited in trans by YbaK. In Haemophilus influenzae (strain ATCC 51907 / DSM 11121 / KW20 / Rd), this protein is Proline--tRNA ligase.